We begin with the raw amino-acid sequence, 320 residues long: RNA polymerase sigma factor SigA2 (320 aa).

The sigma-70 factor domain-2 stretch occupies residues 89 to 159 (MIEANLRLVV…TRAIAQQSRT (71 aa)). Residues 113 to 116 (DLIQ) carry the Interaction with polymerase core subunit RpoC motif. The interval 168–243 (EKLNKLKKTQ…EDEQSSPSDY (76 aa)) is sigma-70 factor domain-3. The interval 256–310 (LMAELTPQQQAVIALRYGLDEGDSLSLAKVGERLNISRERVRKLERQAMDHLRRR) is sigma-70 factor domain-4. Positions 282–301 (LAKVGERLNISRERVRKLER) form a DNA-binding region, H-T-H motif.

It belongs to the sigma-70 factor family.

Its subcellular location is the cytoplasm. Functionally, sigma factors are initiation factors that promote the attachment of RNA polymerase to specific initiation sites and are then released. This sigma factor is a component of the biological clock pathway that affects the circadian expression of a subset of genes in this bacterium. The sequence is that of RNA polymerase sigma factor SigA2 (sigA2) from Synechococcus elongatus (strain ATCC 33912 / PCC 7942 / FACHB-805) (Anacystis nidulans R2).